Here is a 99-residue protein sequence, read N- to C-terminus: Plastocyanin (99 aa).

Residues Val1–Asn99 enclose the Plastocyanin-like domain. Cu cation contacts are provided by His37, Cys84, His87, and Met92.

The protein belongs to the plastocyanin family. Cu(2+) is required as a cofactor.

It is found in the plastid. The protein resides in the chloroplast thylakoid membrane. In terms of biological role, participates in electron transfer between P700 and the cytochrome b6-f complex in photosystem I. The chain is Plastocyanin (PETE) from Vicia faba (Broad bean).